The sequence spans 245 residues: MDIFFVISGFLITGIIITEIQQNSFSLKQFYTRRIKRIYPAFITVMALVSFIASAIFIYNDFNKLRKTIELAIAFLSNFYLGLTQGYFDLSANENPVLHIWSLAVEGQYYLIFPLILILAYKKFREVKVLFIITLILFFILLATSFVSANFYKEVLHQPNIYYLSNLRFPELLVGSLLAIYHNLSNKVQLSKQVNNILAILSTLLLFSCLFLMNNNIAFIPGITLILPCIFTALIIHTTSQNNIR.

Transmembrane regions (helical) follow at residues 38–58, 68–88, 100–120, 129–149, 194–214, and 217–237; these read IYPA…AIFI, TIEL…QGYF, IWSL…LILA, VLFI…FVSA, VNNI…FLMN, and IAFI…LIIH.

This sequence belongs to the acyltransferase 3 family.

It is found in the cell membrane. This is an uncharacterized protein from Haemophilus influenzae (strain ATCC 51907 / DSM 11121 / KW20 / Rd).